We begin with the raw amino-acid sequence, 133 residues long: Protein archease (133 aa).

3 residues coordinate Ca(2+): aspartate 11, aspartate 132, and leucine 133.

Belongs to the archease family.

In terms of biological role, activates the tRNA-splicing ligase complex by facilitating the enzymatic turnover of catalytic subunit RtcB. Acts by promoting the guanylylation of RtcB, a key intermediate step in tRNA ligation. Can also alter the NTP specificity of RtcB such that ATP, dGTP or ITP is used efficiently. In Thermoplasma volcanium (strain ATCC 51530 / DSM 4299 / JCM 9571 / NBRC 15438 / GSS1), this protein is Protein archease.